We begin with the raw amino-acid sequence, 241 residues long: Probable histone-lysine N-methyltransferase set-23 (241 aa).

The Pre-SET domain occupies 25–85; sequence QGCDCETQCS…SCRNKVVQNG (61 aa). Cysteine 27, cysteine 29, cysteine 33, cysteine 39, cysteine 41, cysteine 64, cysteine 68, cysteine 70, and cysteine 77 together coordinate Zn(2+). The SET domain maps to 88–210; sequence KKLKIFSTSE…VGEELSYDYG (123 aa). S-adenosyl-L-methionine-binding positions include 98–100, aspartate 138, tyrosine 140, arginine 167, and 170–171; these read KGD and NH. Positions 173, 222, 224, and 229 each coordinate Zn(2+). Residues 218-234 form the Post-SET domain; that stretch reads NRKLCLCRSENCRKYLP.

It belongs to the class V-like SAM-binding methyltransferase superfamily. Histone-lysine methyltransferase family. Suvar3-9 subfamily.

Its subcellular location is the nucleus. The protein localises to the chromosome. The enzyme catalyses L-lysyl-[histone] + S-adenosyl-L-methionine = N(6)-methyl-L-lysyl-[histone] + S-adenosyl-L-homocysteine + H(+). Its function is as follows. Probable histone methyltransferase required for embryonic development. The chain is Probable histone-lysine N-methyltransferase set-23 from Caenorhabditis briggsae.